Reading from the N-terminus, the 241-residue chain is 1-(5-phosphoribosyl)-5-[(5-phosphoribosylamino)methylideneamino] imidazole-4-carboxamide isomerase (241 aa).

D8 functions as the Proton acceptor in the catalytic mechanism. The active-site Proton donor is the D127.

It belongs to the HisA/HisF family.

It is found in the cytoplasm. The catalysed reaction is 1-(5-phospho-beta-D-ribosyl)-5-[(5-phospho-beta-D-ribosylamino)methylideneamino]imidazole-4-carboxamide = 5-[(5-phospho-1-deoxy-D-ribulos-1-ylimino)methylamino]-1-(5-phospho-beta-D-ribosyl)imidazole-4-carboxamide. Its pathway is amino-acid biosynthesis; L-histidine biosynthesis; L-histidine from 5-phospho-alpha-D-ribose 1-diphosphate: step 4/9. The protein is 1-(5-phosphoribosyl)-5-[(5-phosphoribosylamino)methylideneamino] imidazole-4-carboxamide isomerase of Thermotoga petrophila (strain ATCC BAA-488 / DSM 13995 / JCM 10881 / RKU-1).